Reading from the N-terminus, the 693-residue chain is MWPQPYLPPHPMMLEESRQNKLAAAKKKLKEYQQRKSPGIPAGAKTKKKKTDSSPETTTSGGGHSPGDSQYQELAVALESSSVTINQLNENIESLKQQKKQVEHQLEEAKKTNNEIHKAQMEQLETINILTLEKADLKTTLYHTKRAARHFEEESKDLAGRLQYSLQHIQELERALCAVSTQQQEEDRSSSCREAVLQRRLQQTIKERALLNAHVTQVTESLKQVQLERDEYAKHIKGERARWQERMWKMSVEARTLKEEKKRDIHRIQELERSLSELKNQMAEPPSLAPPAVTSVVEQLQDEAKHLRQEVEGLEGKLQSQVENNQALSLLSKEQKQRLQEQEEMLREQEAQRVREQERLCEQNERLREQQKTLQEQGERLRKQEQRLRKQEERLRKEEERLQKQEKRLWDQEERLWKKEERLQKQEERLALSQNHKLDKQLAEPQCSFEDLNNEKKSALQLEQQVKELQEKLDEEHLEAASQRNQQLETQLSLVALPGEGDGGQHLDSEEEEAPRPTPNIPEDLESREATSSFMDLPKEKADGTEQVERRELGFVQPSGVTDGMRESFTVYESQGAVPNTRHQEMEDVIRLAQKEEEMKVKLLELQELVLPLVGNHEGHGKFLIAAQNPADEPTPGAPAPQELGAAGEQDVFYEVSLDNNVEPAPGVAREGSPHNNPTVQQIVQLSPVMQDT.

Residues 14–611 (LEESRQNKLA…KLLELQELVL (598 aa)) are a coiled coil. Disordered regions lie at residues 20–70 (NKLA…GDSQ), 497–547 (LPGE…GTEQ), and 662–693 (VEPA…MQDT). The span at 537-547 (LPKEKADGTEQ) shows a compositional bias: basic and acidic residues. The segment covering 674–693 (PHNNPTVQQIVQLSPVMQDT) has biased composition (polar residues).

It belongs to the GOLGA6 family.

The polypeptide is Golgin subfamily A member 6D (GOLGA6D) (Homo sapiens (Human)).